We begin with the raw amino-acid sequence, 292 residues long: D-galactarolactone isomerase (292 aa).

Belongs to the metallo-dependent hydrolases superfamily. The cofactor is Does not require a metal cofactor..

It catalyses the reaction D-galactaro-1,5-lactone = D-galactaro-1,4-lactone. Its pathway is carbohydrate acid metabolism; D-galacturonate degradation via prokaryotic oxidative pathway. In terms of biological role, catalyzes the isomerization of D-galactaro-1,5-lactone to D-galactaro-1,4-lactone. This is a step in the oxidative degradation pathway of D-galacturonate, which allows A.tumefaciens to utilize D-galacturonate as a sole carbon source. The protein is D-galactarolactone isomerase of Agrobacterium fabrum (strain C58 / ATCC 33970) (Agrobacterium tumefaciens (strain C58)).